Consider the following 232-residue polypeptide: MSEVVTVKQTNMENIYECEFNDGSFRLCTRNLVSGFNVYGERLIKYEGVEYREWNAFRSKLAGAILKGLKTNPIRKGTKVLYLGAASGTTISHVSDIIELNGKAYGVEFSPRVVRELLLVAQRRPNIFPLLADARFPQSYKSVVENVDVLYVDIAQPDQTDIAIYNARFFLKVNGYMLLVIKARSIDVTKDPKEIYKAEVEKLENSNFETIQIINLDPYDKDHAIVLSRYKG.

S-adenosyl-L-methionine is bound by residues 89–90, 108–109, 133–134, and 153–156; these read TT, EF, DA, and DIAQ.

The protein belongs to the methyltransferase superfamily. Fibrillarin family. Interacts with nop5. Component of box C/D small ribonucleoprotein (sRNP) particles that contain rpl7ae, FlpA and nop5, plus a guide RNA.

Involved in pre-rRNA and tRNA processing. Utilizes the methyl donor S-adenosyl-L-methionine to catalyze the site-specific 2'-hydroxyl methylation of ribose moieties in rRNA and tRNA. Site specificity is provided by a guide RNA that base pairs with the substrate. Methylation occurs at a characteristic distance from the sequence involved in base pairing with the guide RNA. The sequence is that of Fibrillarin-like rRNA/tRNA 2'-O-methyltransferase from Saccharolobus islandicus (strain L.S.2.15 / Lassen #1) (Sulfolobus islandicus).